The chain runs to 255 residues: Fasciclin-like arabinogalactan protein 14 (255 aa).

An N-terminal signal peptide occupies residues 1–23 (MSSSLTIFFFFFASTFLYTSSNS). Residues 24–169 (FNITNILNEH…ISVLHISSAI (146 aa)) enclose the FAS1 domain. Residues Asn25, Asn99, Asn125, and Asn159 are each glycosylated (N-linked (GlcNAc...) asparagine). Residues 179 to 231 (PTASPLSPVSSPPRPAESPNDDGQDFDEPPSSAPGAAADEPSENAGSANGVSR) form a disordered region. The segment covering 197 to 206 (PNDDGQDFDE) has biased composition (acidic residues). Over residues 222-231 (NAGSANGVSR) the composition is skewed to polar residues. Ser225 carries GPI-anchor amidated serine lipidation. Residues 226 to 255 (ANGVSRNDSQPAFAFTLLMSFIWWFMARLR) constitute a propeptide, removed in mature form.

This sequence belongs to the fasciclin-like AGP family.

It is found in the cell membrane. May be a cell surface adhesion protein. This chain is Fasciclin-like arabinogalactan protein 14 (FLA14), found in Arabidopsis thaliana (Mouse-ear cress).